The chain runs to 328 residues: Cell division protein ZipA (328 aa).

Residues 1–4 are Periplasmic-facing; that stretch reads MDLN. Residues 5 to 25 form a helical membrane-spanning segment; sequence TILIIVGIVALVALIVHGLWS. The Cytoplasmic segment spans residues 26–328; the sequence is NRREKSKYFD…NAEQAYLARV (303 aa). A disordered region spans residues 43–82; sequence TSLTSRSHTQEEMAQPNNISPNTYVENGHTPIPQPTTEKV. The span at 57-67 shows a compositional bias: polar residues; sequence QPNNISPNTYV.

It belongs to the ZipA family. As to quaternary structure, interacts with FtsZ via their C-terminal domains.

The protein resides in the cell inner membrane. Essential cell division protein that stabilizes the FtsZ protofilaments by cross-linking them and that serves as a cytoplasmic membrane anchor for the Z ring. Also required for the recruitment to the septal ring of downstream cell division proteins. The chain is Cell division protein ZipA from Haemophilus influenzae (strain PittEE).